We begin with the raw amino-acid sequence, 494 residues long: Aldehyde dehydrogenase (494 aa).

Residue 223 to 228 (GSTTAG) participates in NAD(+) binding. Active-site residues include Glu-245 and Cys-279.

It belongs to the aldehyde dehydrogenase family.

The catalysed reaction is an aldehyde + NAD(+) + H2O = a carboxylate + NADH + 2 H(+). It functions in the pathway mycotoxin biosynthesis. Its function is as follows. Aldehyde dehydrogenase; part of the gene cluster that mediates the biosynthesis of the selective antifungal agent ascochitine, an o-quinone methide that plays a possible protective role against other microbial competitors in nature and is considered to be important for pathogenicity of legume-associated Didymella species. The pathway probably begins with the synthesis of a keto-aldehyde intermediate by the ascochitine non-reducing polyketide synthase pksAC from successive condensations of 4 malonyl-CoA units, presumably with a simple acetyl-CoA starter unit. Release of the keto-aldehyde intermediate is consistent with the presence of the C-terminal reductive release domain. The HR-PKS (orf7) probably makes a diketide starter unit which is passed to the non-reducing polyketide synthase pksAC for further extension, producing ascochital and ascochitine. The aldehyde dehydrogenase (orf1), the 2-oxoglutarate-dependent dioxygenase (orf3) and the dehydrogenase (orf9) are probably involved in subsequent oxidations of methyl groups to the carboxylic acid of the heterocyclic ring. The ascochitine gene cluster also includes a gene encoding a short peptide with a cupin domain (orf2) that is often found in secondary metabolite gene clusters and which function has still to be determined. The chain is Aldehyde dehydrogenase from Didymella fabae (Leaf and pod spot disease fungus).